Consider the following 392-residue polypeptide: Anhydro-N-acetylmuramic acid kinase (392 aa).

Residue 22–29 participates in ATP binding; the sequence is GTSMDGVD.

The protein belongs to the anhydro-N-acetylmuramic acid kinase family.

It carries out the reaction 1,6-anhydro-N-acetyl-beta-muramate + ATP + H2O = N-acetyl-D-muramate 6-phosphate + ADP + H(+). It participates in amino-sugar metabolism; 1,6-anhydro-N-acetylmuramate degradation. Its pathway is cell wall biogenesis; peptidoglycan recycling. Functionally, catalyzes the specific phosphorylation of 1,6-anhydro-N-acetylmuramic acid (anhMurNAc) with the simultaneous cleavage of the 1,6-anhydro ring, generating MurNAc-6-P. Is required for the utilization of anhMurNAc either imported from the medium or derived from its own cell wall murein, and thus plays a role in cell wall recycling. This chain is Anhydro-N-acetylmuramic acid kinase, found in Burkholderia mallei (strain NCTC 10229).